A 308-amino-acid polypeptide reads, in one-letter code: Porphobilinogen deaminase (308 aa).

At cysteine 242 the chain carries S-(dipyrrolylmethanemethyl)cysteine.

Belongs to the HMBS family. As to quaternary structure, monomer. The cofactor is dipyrromethane.

The enzyme catalyses 4 porphobilinogen + H2O = hydroxymethylbilane + 4 NH4(+). It participates in porphyrin-containing compound metabolism; protoporphyrin-IX biosynthesis; coproporphyrinogen-III from 5-aminolevulinate: step 2/4. Its function is as follows. Tetrapolymerization of the monopyrrole PBG into the hydroxymethylbilane pre-uroporphyrinogen in several discrete steps. This chain is Porphobilinogen deaminase, found in Alkalilimnicola ehrlichii (strain ATCC BAA-1101 / DSM 17681 / MLHE-1).